Consider the following 512-residue polypeptide: Retinaldehyde dehydrogenase 3 (512 aa).

The segment at 1–22 (MATANGAVENGQPDRKPPALPR) is disordered. An N-acetylalanine modification is found at Ala-2. NAD(+) is bound by residues Lys-204, Glu-207, and 257-262 (GSTEVG). Glu-280 (proton acceptor) is an active-site residue. Residue Cys-314 is the Nucleophile of the active site. NAD(+) contacts are provided by Gln-361 and Glu-411.

This sequence belongs to the aldehyde dehydrogenase family. In terms of assembly, homotetramer. Expressed at low levels in many tissues and at higher levels in salivary gland, stomach, and kidney.

It is found in the cytoplasm. It catalyses the reaction all-trans-retinal + NAD(+) + H2O = all-trans-retinoate + NADH + 2 H(+). It carries out the reaction retinal + NAD(+) + H2O = retinoate + NADH + 2 H(+). The catalysed reaction is all-trans-13,14-dihydroretinal + NAD(+) + H2O = all-trans-13,14-dihydroretinoate + NADH + 2 H(+). It participates in cofactor metabolism; retinol metabolism. Functionally, catalyzes the NAD-dependent oxidation of aldehyde substrates, such as all-trans-retinal and all-trans-13,14-dihydroretinal, to their corresponding carboxylic acids, all-trans-retinoate and all-trans-13,14-dihydroretinoate, respectively. High specificity for all-trans-retinal as substrate, can also accept acetaldehyde as substrate in vitro but with lower affinity. Required for the biosynthesis of normal levels of retinoate in the embryonic ocular and nasal regions; a critical lipid in the embryonic development of the eye and the nasal region. The polypeptide is Retinaldehyde dehydrogenase 3 (ALDH1A3) (Homo sapiens (Human)).